The following is a 341-amino-acid chain: Phosphoribosylformylglycinamidine cyclo-ligase (341 aa).

This sequence belongs to the AIR synthase family.

The protein resides in the cytoplasm. The enzyme catalyses 2-formamido-N(1)-(5-O-phospho-beta-D-ribosyl)acetamidine + ATP = 5-amino-1-(5-phospho-beta-D-ribosyl)imidazole + ADP + phosphate + H(+). Its pathway is purine metabolism; IMP biosynthesis via de novo pathway; 5-amino-1-(5-phospho-D-ribosyl)imidazole from N(2)-formyl-N(1)-(5-phospho-D-ribosyl)glycinamide: step 2/2. The sequence is that of Phosphoribosylformylglycinamidine cyclo-ligase from Xanthomonas axonopodis pv. citri (strain 306).